Here is a 370-residue protein sequence, read N- to C-terminus: Aminomethyltransferase (370 aa).

It belongs to the GcvT family. In terms of assembly, the glycine cleavage system is composed of four proteins: P, T, L and H.

It catalyses the reaction N(6)-[(R)-S(8)-aminomethyldihydrolipoyl]-L-lysyl-[protein] + (6S)-5,6,7,8-tetrahydrofolate = N(6)-[(R)-dihydrolipoyl]-L-lysyl-[protein] + (6R)-5,10-methylene-5,6,7,8-tetrahydrofolate + NH4(+). In terms of biological role, the glycine cleavage system catalyzes the degradation of glycine. This chain is Aminomethyltransferase, found in Prochlorococcus marinus (strain MIT 9515).